We begin with the raw amino-acid sequence, 107 residues long: Sperm-specific class P protein 31 (107 aa).

Residues 1 to 107 (MINIDPPSGD…GEVVVKMVAS (107 aa)) form the MSP domain.

As to expression, expressed at higher level in testis.

In Caenorhabditis elegans, this protein is Sperm-specific class P protein 31 (ssp-31).